The primary structure comprises 640 residues: Threonine--tRNA ligase (640 aa).

Positions 1–61 (MPAITLPDGS…EHDAYVEIVT (61 aa)) constitute a TGS domain. Residues 242-533 (DHRRLGRTQD…LIEHYGGALP (292 aa)) form a catalytic region. Residues Cys-333, His-384, and His-510 each contribute to the Zn(2+) site.

It belongs to the class-II aminoacyl-tRNA synthetase family. Homodimer. Zn(2+) is required as a cofactor.

The protein resides in the cytoplasm. The catalysed reaction is tRNA(Thr) + L-threonine + ATP = L-threonyl-tRNA(Thr) + AMP + diphosphate + H(+). In terms of biological role, catalyzes the attachment of threonine to tRNA(Thr) in a two-step reaction: L-threonine is first activated by ATP to form Thr-AMP and then transferred to the acceptor end of tRNA(Thr). Also edits incorrectly charged L-seryl-tRNA(Thr). The chain is Threonine--tRNA ligase from Halorhodospira halophila (strain DSM 244 / SL1) (Ectothiorhodospira halophila (strain DSM 244 / SL1)).